Consider the following 131-residue polypeptide: Small ribosomal subunit protein uS11 (131 aa).

It belongs to the universal ribosomal protein uS11 family. As to quaternary structure, part of the 30S ribosomal subunit. Interacts with proteins S7 and S18. Binds to IF-3.

Functionally, located on the platform of the 30S subunit, it bridges several disparate RNA helices of the 16S rRNA. Forms part of the Shine-Dalgarno cleft in the 70S ribosome. In Granulibacter bethesdensis (strain ATCC BAA-1260 / CGDNIH1), this protein is Small ribosomal subunit protein uS11.